The sequence spans 218 residues: Ras-related protein Rab-11B (218 aa).

Gly-2 is subject to N-acetylglycine. Ser-20, Gly-21, Gly-23, Lys-24, Ser-25, Asn-26, Asn-37, Leu-38, Ser-40, Ser-42, and Thr-43 together coordinate GTP. Ser-25 serves as a coordination point for Mg(2+). The Switch 1 signature appears at 36–47 (FNLESKSTIGVE). Positions 43 and 66 each coordinate Mg(2+). A Switch 2 motif is present at residues 67 to 86 (TAGQERYRAITSAYYRGAVG). GTP is bound by residues Gly-69, Asn-124, Lys-125, Asp-127, Ala-155, and Leu-156. The tract at residues 183–218 (DRSAHDESPGNNVVDISVPPTTDGQKSNKLQCCQNM) is disordered. Positions 201 to 218 (PPTTDGQKSNKLQCCQNM) are enriched in polar residues. 2 S-geranylgeranyl cysteine lipidation sites follow: Cys-214 and Cys-215. Cys-215 bears the Cysteine methyl ester mark. Residues 216 to 218 (QNM) constitute a propeptide, removed in mature form.

This sequence belongs to the small GTPase superfamily. Rab family. Requires Mg(2+) as cofactor.

The protein localises to the recycling endosome membrane. It localises to the cytoplasmic vesicle. It is found in the secretory vesicle. The protein resides in the synaptic vesicle membrane. Its subcellular location is the phagosome membrane. The enzyme catalyses GTP + H2O = GDP + phosphate + H(+). With respect to regulation, regulated by guanine nucleotide exchange factors (GEFs) which promote the exchange of bound GDP for free GTP. Regulated by GTPase activating proteins (GAPs) which increase the GTP hydrolysis activity. Inhibited by GDP dissociation inhibitors (GDIs) which prevent Rab-GDP dissociation. Its function is as follows. The small GTPases Rab are key regulators of intracellular membrane trafficking, from the formation of transport vesicles to their fusion with membranes. Rabs cycle between an inactive GDP-bound form and an active GTP-bound form that is able to recruit to membranes different set of downstream effectors directly responsible for vesicle formation, movement, tethering and fusion. That Rab plays a role in endocytic recycling, regulating apical recycling of several transmembrane proteins including cystic fibrosis transmembrane conductance regulator/CFTR, epithelial sodium channel/ENaC, potassium voltage-gated channel, and voltage-dependent L-type calcium channel. May also regulate constitutive and regulated secretion, like insulin granule exocytosis. Required for melanosome transport and release from melanocytes. Also regulates V-ATPase intracellular transport in response to extracellular acidosis. The chain is Ras-related protein Rab-11B from Diplobatis ommata (Ocellated electric ray).